The primary structure comprises 216 residues: Probable GTP-binding protein EngB (216 aa).

Residues 26-200 (EGIEIAFAGR…RAKLDTWFAP (175 aa)) enclose the EngB-type G domain. GTP contacts are provided by residues 34–41 (GRSNAGKS), 61–65 (GRTQL), 79–82 (DLPG), 146–149 (TKAD), and 179–181 (YSS). Mg(2+) is bound by residues Ser41 and Thr63.

It belongs to the TRAFAC class TrmE-Era-EngA-EngB-Septin-like GTPase superfamily. EngB GTPase family. Mg(2+) serves as cofactor.

Functionally, necessary for normal cell division and for the maintenance of normal septation. The sequence is that of Probable GTP-binding protein EngB from Vibrio vulnificus (strain CMCP6).